The sequence spans 122 residues: Bet1-like SNARE 1-1 (122 aa).

At 1-103 (MNPRREPRGG…VFETKSSRRM (103 aa)) the chain is on the cytoplasmic side. Positions 32-94 (EINEHENERA…SGTMDRFKTV (63 aa)) constitute a t-SNARE coiled-coil homology domain. Ser-56 bears the Phosphoserine mark. Residues 104-121 (LTLVASFVGLFLVIYYLT) traverse the membrane as a helical; Anchor for type IV membrane protein segment. Position 122 (Arg-122) is a topological domain, vesicular.

This sequence belongs to the BET1 family.

The protein localises to the golgi apparatus membrane. It localises to the endoplasmic reticulum membrane. Functionally, required for vesicular transport from the ER to the Golgi complex. Functions as a SNARE associated with ER-derived vesicles. In Arabidopsis thaliana (Mouse-ear cress), this protein is Bet1-like SNARE 1-1 (BET11).